The following is a 142-amino-acid chain: Large ribosomal subunit protein uL11 (142 aa).

Belongs to the universal ribosomal protein uL11 family. In terms of assembly, part of the ribosomal stalk of the 50S ribosomal subunit. Interacts with L10 and the large rRNA to form the base of the stalk. L10 forms an elongated spine to which L12 dimers bind in a sequential fashion forming a multimeric L10(L12)X complex. In terms of processing, one or more lysine residues are methylated.

In terms of biological role, forms part of the ribosomal stalk which helps the ribosome interact with GTP-bound translation factors. The polypeptide is Large ribosomal subunit protein uL11 (Shewanella oneidensis (strain ATCC 700550 / JCM 31522 / CIP 106686 / LMG 19005 / NCIMB 14063 / MR-1)).